We begin with the raw amino-acid sequence, 1345 residues long: Aldehyde oxidase 2 (1345 aa).

The 2Fe-2S ferredoxin-type domain occupies 9 to 96; it reads DELEFFVNGK…GAAVTTVEGV (88 aa). [2Fe-2S] cluster contacts are provided by cysteine 48, cysteine 53, cysteine 56, and cysteine 78. Mo-molybdopterin is bound at residue glutamine 117. [2Fe-2S] cluster is bound by residues cysteine 118, cysteine 121, cysteine 153, and cysteine 155. Cysteine 155 provides a ligand contact to Mo-molybdopterin. The FAD-binding PCMH-type domain occupies 238–423; that stretch reads FYGERITWIA…GSVYIPHSQK (186 aa). FAD is bound by residues 266–273, alanine 347, serine 356, histidine 360, aspartate 369, and leucine 413; that span reads LISGNTAL. Mo-molybdopterin is bound by residues 812 to 813, 1094 to 1097, glutamine 1209, and leucine 1274; these read GF and ASVG. The Proton acceptor; for azaheterocycle hydroxylase activity role is filled by glutamate 1276.

This sequence belongs to the xanthine dehydrogenase family. In terms of assembly, homodimer. It depends on [2Fe-2S] cluster as a cofactor. FAD serves as cofactor. Mo-molybdopterin is required as a cofactor.

Its subcellular location is the cytoplasm. It carries out the reaction an aldehyde + O2 + H2O = a carboxylate + H2O2 + H(+). Its function is as follows. Oxidase with broad substrate specificity, oxidizing aromatic azaheterocycles, such as phthalazine, as well as aldehydes, such as benzaldehyde and retinal. The sequence is that of Aldehyde oxidase 2 (Aox2) from Rattus norvegicus (Rat).